Consider the following 495-residue polypeptide: Type-1 histone deacetylase 1 (495 aa).

Aspartate 94 provides a ligand contact to substrate. The active-site Proton acceptor is histidine 136. Glycine 144 is a binding site for substrate. A divalent metal cation-binding residues include aspartate 171, histidine 173, and aspartate 259. Residue tyrosine 298 coordinates substrate. The interval 372–495 is disordered; it reads PAAAHHDIPP…EDADVDMDSG (124 aa). The segment covering 396-413 has biased composition (basic and acidic residues); the sequence is DVRISEADRDKKVHHQGE. Positions 425-443 are enriched in polar residues; it reads NYSNGLEATSTSRRNQVSI. Residues 454 to 480 show a composition bias toward low complexity; the sequence is NSRNNNNNNNNNNNNNNNNNNNSNNNN.

It belongs to the histone deacetylase family. HD type 1 subfamily.

Its subcellular location is the nucleus. The protein resides in the cytoplasm. It catalyses the reaction N(6)-acetyl-L-lysyl-[histone] + H2O = L-lysyl-[histone] + acetate. Functionally, responsible for the deacetylation of lysine residues on the N-terminal part of the core histones (H2A, H2B, H3 and H4). Histone deacetylation plays an important role in transcriptional regulation, cell cycle progression and developmental events. Histone deacetylases act via the formation of large multiprotein complexes. This is Type-1 histone deacetylase 1 (hdaA) from Dictyostelium discoideum (Social amoeba).